Reading from the N-terminus, the 231-residue chain is Phosphatidylserine decarboxylase proenzyme (231 aa).

Residue Ser200 is the Schiff-base intermediate with substrate; via pyruvic acid of the active site. Ser200 carries the pyruvic acid (Ser); by autocatalysis modification.

It belongs to the phosphatidylserine decarboxylase family. PSD-A subfamily. Heterodimer of a large membrane-associated beta subunit and a small pyruvoyl-containing alpha subunit. Pyruvate serves as cofactor. Post-translationally, is synthesized initially as an inactive proenzyme. Formation of the active enzyme involves a self-maturation process in which the active site pyruvoyl group is generated from an internal serine residue via an autocatalytic post-translational modification. Two non-identical subunits are generated from the proenzyme in this reaction, and the pyruvate is formed at the N-terminus of the alpha chain, which is derived from the carboxyl end of the proenzyme. The post-translation cleavage follows an unusual pathway, termed non-hydrolytic serinolysis, in which the side chain hydroxyl group of the serine supplies its oxygen atom to form the C-terminus of the beta chain, while the remainder of the serine residue undergoes an oxidative deamination to produce ammonia and the pyruvoyl prosthetic group on the alpha chain.

Its subcellular location is the cell membrane. It carries out the reaction a 1,2-diacyl-sn-glycero-3-phospho-L-serine + H(+) = a 1,2-diacyl-sn-glycero-3-phosphoethanolamine + CO2. It functions in the pathway phospholipid metabolism; phosphatidylethanolamine biosynthesis; phosphatidylethanolamine from CDP-diacylglycerol: step 2/2. Functionally, catalyzes the formation of phosphatidylethanolamine (PtdEtn) from phosphatidylserine (PtdSer). In Mycobacterium tuberculosis (strain ATCC 25177 / H37Ra), this protein is Phosphatidylserine decarboxylase proenzyme.